The following is a 959-amino-acid chain: Autophagy-related protein 18g (959 aa).

WD repeat units lie at residues 376–416 and 438–479; these read AHTS…SHNA and ITSA…AAFQ. A disordered region spans residues 802–832; that stretch reads GSIESAESSEEGSTKQMENLHDSDHMSNSIK.

It belongs to the WD repeat PROPPIN family. As to quaternary structure, component of the PI(3,5)P2 regulatory complex at least composed of ATG18, SAC/FIG4, FAB1 and VAC14. As to expression, expressed in leaves.

The protein localises to the preautophagosomal structure membrane. The protein resides in the vacuole membrane. In terms of biological role, the PI(3,5)P2 regulatory complex regulates both the synthesis and turnover of phosphatidylinositol 3,5-bisphosphate (PtdIns(3,5)P2). Required for autophagy. The chain is Autophagy-related protein 18g (ATG18G) from Arabidopsis thaliana (Mouse-ear cress).